Here is a 127-residue protein sequence, read N- to C-terminus: Small ribosomal subunit protein uS11c (127 aa).

The protein belongs to the universal ribosomal protein uS11 family. Part of the 30S ribosomal subunit.

The protein localises to the plastid. It is found in the chloroplast. The sequence is that of Small ribosomal subunit protein uS11c from Heterosigma akashiwo (strain NIES-293 / 8280G21-1).